Reading from the N-terminus, the 512-residue chain is Maturase K (512 aa).

It belongs to the intron maturase 2 family. MatK subfamily.

The protein resides in the plastid. Its subcellular location is the chloroplast. Its function is as follows. Usually encoded in the trnK tRNA gene intron. Probably assists in splicing its own and other chloroplast group II introns. The sequence is that of Maturase K from Filarum manserichense.